Consider the following 96-residue polypeptide: UPF0235 protein YggU (96 aa).

The protein belongs to the UPF0235 family.

This is UPF0235 protein YggU from Salmonella newport (strain SL254).